The sequence spans 327 residues: Ferrochelatase (327 aa).

Residues H187 and E265 each contribute to the Fe cation site.

Belongs to the ferrochelatase family.

The protein localises to the cytoplasm. The enzyme catalyses heme b + 2 H(+) = protoporphyrin IX + Fe(2+). Its pathway is porphyrin-containing compound metabolism; protoheme biosynthesis; protoheme from protoporphyrin-IX: step 1/1. Functionally, catalyzes the ferrous insertion into protoporphyrin IX. The sequence is that of Ferrochelatase from Chlamydia pneumoniae (Chlamydophila pneumoniae).